The following is a 173-amino-acid chain: Lipoprotein signal peptidase (173 aa).

3 helical membrane-spanning segments follow: residues 9–29, 37–57, and 70–90; these read LPFL…ILVV, VIPV…GAAF, and ILLV…YLKS. Residues Asp-124 and Asp-146 contribute to the active site. A helical membrane pass occupies residues 142–162; it reads FNAADSFIVCCGIGLGVNLIL.

The protein belongs to the peptidase A8 family.

The protein resides in the cell inner membrane. The enzyme catalyses Release of signal peptides from bacterial membrane prolipoproteins. Hydrolyzes -Xaa-Yaa-Zaa-|-(S,diacylglyceryl)Cys-, in which Xaa is hydrophobic (preferably Leu), and Yaa (Ala or Ser) and Zaa (Gly or Ala) have small, neutral side chains.. It participates in protein modification; lipoprotein biosynthesis (signal peptide cleavage). This protein specifically catalyzes the removal of signal peptides from prolipoproteins. The sequence is that of Lipoprotein signal peptidase from Treponema denticola (strain ATCC 35405 / DSM 14222 / CIP 103919 / JCM 8153 / KCTC 15104).